We begin with the raw amino-acid sequence, 223 residues long: Noggin (223 aa).

The N-terminal stretch at 1–26 is a signal peptide; sequence MDPPRLRVATYLLLLSVGLLLHGGAC. A glycan (N-linked (GlcNAc...) asparagine) is linked at N61. Cystine bridges form between C143-C180, C166-C217, C172-C219, and C195-C204.

Belongs to the noggin family. As to quaternary structure, homodimer.

Its subcellular location is the secreted. Inhibitor of bone morphogenetic proteins (BMP) signaling. The sequence is that of Noggin (nog) from Takifugu rubripes (Japanese pufferfish).